The sequence spans 243 residues: Geranylgeranylglyceryl phosphate synthase (243 aa).

Residues D29 and S58 each contribute to the Mg(2+) site. Sn-glycerol 1-phosphate contacts are provided by residues 178–184 (YLEAGSG), 209–210 (GG), and 231–232 (GT).

Belongs to the GGGP/HepGP synthase family. Group II subfamily. Homodimer. The cofactor is Mg(2+).

It carries out the reaction sn-glycerol 1-phosphate + (2E,6E,10E)-geranylgeranyl diphosphate = sn-3-O-(geranylgeranyl)glycerol 1-phosphate + diphosphate. Prenyltransferase that catalyzes the transfer of the geranylgeranyl moiety of geranylgeranyl diphosphate (GGPP) to the C3 hydroxyl of sn-glycerol-1-phosphate (G1P). This is Geranylgeranylglyceryl phosphate synthase from Flavobacterium johnsoniae (strain ATCC 17061 / DSM 2064 / JCM 8514 / BCRC 14874 / CCUG 350202 / NBRC 14942 / NCIMB 11054 / UW101) (Cytophaga johnsonae).